The primary structure comprises 91 residues: DNA-binding protein HRL53 (91 aa).

The segment at 57 to 91 is disordered; sequence ATKGRNPSTGAEVDIPARNVPKFTPGKGLKDAVNG.

Belongs to the bacterial histone-like protein family.

Its function is as follows. Histone-like DNA-binding protein which is capable of wrapping DNA to stabilize it, and thus to prevent its denaturation under extreme environmental conditions. Binds to nod promoters and induces DNA binding. In Rhizobium leguminosarum, this protein is DNA-binding protein HRL53.